The sequence spans 234 residues: Adenosine 5'-phosphosulfate reductase (234 aa).

[4Fe-4S] cluster is bound by residues Cys120, Cys121, Cys203, and Cys206. Residue Cys229 is the Nucleophile; cysteine thiosulfonate intermediate of the active site.

Belongs to the PAPS reductase family. CysH subfamily. It depends on [4Fe-4S] cluster as a cofactor.

The protein resides in the cytoplasm. It catalyses the reaction [thioredoxin]-disulfide + sulfite + AMP + 2 H(+) = adenosine 5'-phosphosulfate + [thioredoxin]-dithiol. Its pathway is sulfur metabolism; hydrogen sulfide biosynthesis; sulfite from sulfate. Its function is as follows. Catalyzes the formation of sulfite from adenosine 5'-phosphosulfate (APS) using thioredoxin as an electron donor. The polypeptide is Adenosine 5'-phosphosulfate reductase (Bacillus cytotoxicus (strain DSM 22905 / CIP 110041 / 391-98 / NVH 391-98)).